Consider the following 288-residue polypeptide: DNA repair protein RecO (288 aa).

The protein belongs to the RecO family.

Involved in DNA repair and RecF pathway recombination. This Trichodesmium erythraeum (strain IMS101) protein is DNA repair protein RecO.